The following is a 305-amino-acid chain: Taste receptor type 2 member 136 (305 aa).

Residues 1 to 9 (MMSFLVSIA) lie on the Extracellular side of the membrane. A helical membrane pass occupies residues 10-30 (SIAMLVKIVLGTFANVFIVLV). Topologically, residues 31–46 (NFTDCIKKRKFLLADR) are cytoplasmic. The helical transmembrane segment at 47–67 (ILTVLAIFRFDLLWIILMNWS) threads the bilayer. Residues 68-69 (SS) lie on the Extracellular side of the membrane. A helical membrane pass occupies residues 70–90 (VFHVGLYFQVRFCICVVWIVT). Over 91 to 99 (NHFNTWLAN) the chain is Cytoplasmic. Residues 100 to 120 (ILSILYLLKIDNFSNLIFLGL) traverse the membrane as a helical segment. The Extracellular portion of the chain corresponds to 121–127 (KGKIKCP). A helical membrane pass occupies residues 128 to 148 (YIVLLPCFVLLFPNLIMVTIC). The Cytoplasmic segment spans residues 149–176 (ETTQANGHQGNLTGKTKLTYFTNLIAMT). The chain crosses the membrane as a helical span at residues 177-197 (FTLGSLVPFTTFMICFLLLIC). Topologically, residues 198 to 223 (SLCKHLRTMRLYGKGSQGPSASTHIK) are extracellular. The chain crosses the membrane as a helical span at residues 224–244 (VLQVLISFLLLFSMFILLLII). At 245–305 (SDYNYTKSLE…ARFWLKEKKP (61 aa)) the chain is on the cytoplasmic side.

Belongs to the G-protein coupled receptor T2R family.

The protein resides in the membrane. In terms of biological role, putative taste receptor which may play a role in the perception of bitterness. This chain is Taste receptor type 2 member 136 (Tas2r136), found in Mus musculus (Mouse).